Reading from the N-terminus, the 62-residue chain is Coiled-coil domain-containing protein YLR146W-A (62 aa).

The stretch at 14–49 (EHARMLQNEIQQLFAQLRDTNSQIRCDLNEFEQIKE) forms a coiled coil.

The chain is Coiled-coil domain-containing protein YLR146W-A from Saccharomyces cerevisiae (strain ATCC 204508 / S288c) (Baker's yeast).